The primary structure comprises 409 residues: Protein ROOT PRIMORDIUM DEFECTIVE 1 (409 aa).

A PORR domain is found at 47-386 (VRDHGYDNYM…RLAELVLMSP (340 aa)).

As to expression, expressed in roots, hypocotyls, cotyledons and shoot apex.

Involved in pre-arranging the maintenance of the active cell proliferation during root primordium development. Does not seem to be involved in cell cycle progression. The sequence is that of Protein ROOT PRIMORDIUM DEFECTIVE 1 (RPD1) from Arabidopsis thaliana (Mouse-ear cress).